Reading from the N-terminus, the 185-residue chain is Crossover junction endodeoxyribonuclease RuvC (185 aa).

Catalysis depends on residues aspartate 16, glutamate 75, and aspartate 147. Residues aspartate 16, glutamate 75, and aspartate 147 each coordinate Mg(2+).

Belongs to the RuvC family. In terms of assembly, homodimer which binds Holliday junction (HJ) DNA. The HJ becomes 2-fold symmetrical on binding to RuvC with unstacked arms; it has a different conformation from HJ DNA in complex with RuvA. In the full resolvosome a probable DNA-RuvA(4)-RuvB(12)-RuvC(2) complex forms which resolves the HJ. Mg(2+) serves as cofactor.

It is found in the cytoplasm. It carries out the reaction Endonucleolytic cleavage at a junction such as a reciprocal single-stranded crossover between two homologous DNA duplexes (Holliday junction).. In terms of biological role, the RuvA-RuvB-RuvC complex processes Holliday junction (HJ) DNA during genetic recombination and DNA repair. Endonuclease that resolves HJ intermediates. Cleaves cruciform DNA by making single-stranded nicks across the HJ at symmetrical positions within the homologous arms, yielding a 5'-phosphate and a 3'-hydroxyl group; requires a central core of homology in the junction. The consensus cleavage sequence is 5'-(A/T)TT(C/G)-3'. Cleavage occurs on the 3'-side of the TT dinucleotide at the point of strand exchange. HJ branch migration catalyzed by RuvA-RuvB allows RuvC to scan DNA until it finds its consensus sequence, where it cleaves and resolves the cruciform DNA. This is Crossover junction endodeoxyribonuclease RuvC from Aromatoleum aromaticum (strain DSM 19018 / LMG 30748 / EbN1) (Azoarcus sp. (strain EbN1)).